Consider the following 279-residue polypeptide: Alcohol dehydrogenase-related 31 kDa protein (279 aa).

11–34 provides a ligand contact to NAD(+); the sequence is YVADCGGIALETSKVLMTKNIAKL. Ser-139 provides a ligand contact to substrate. Tyr-152 acts as the Proton acceptor in catalysis.

The protein belongs to the short-chain dehydrogenases/reductases (SDR) family.

The chain is Alcohol dehydrogenase-related 31 kDa protein (Adhr) from Drosophila guanche (Fruit fly).